The following is a 406-amino-acid chain: Prenyltransferase phqJ (406 aa).

Residues 1–19 (MTVSTESNFPHGASTQKPQ) show a composition bias toward polar residues. The segment at 1–23 (MTVSTESNFPHGASTQKPQSAEP) is disordered. Residue E99 participates in brevianamide F binding. Dimethylallyl diphosphate-binding residues include R113, K200, and Y202. Y204 is a binding site for brevianamide F. The dimethylallyl diphosphate site is built by K269, Y271, and Y340.

The protein belongs to the tryptophan dimethylallyltransferase family.

It functions in the pathway alkaloid biosynthesis. Functionally, prenyltransferase; part of the gene cluster that mediates the biosynthesis of paraherquamide, a fungal indole alkaloid that belongs to a family of natural products containing a characteristic bicyclo[2.2.2]diazaoctane core. The first steps in the biosynthesis of paraherquamide is the production of the beta-methyl-proline precursor from L-isoleucine. They require oxidation of a terminally hydroxylated L-isoleucine to the corresponding aldehyde by enzymes which have still to be identified. Spontaneous cyclization and dehydration would yield the 4-methyl pyrolline-5-carboxylic acid, which is then reduced by the pyrroline-5-carboxylate reductase phqD leading to the beta-methyl-proline precursor. The next step of paraherquamide biosynthesis involves coupling of beta-methyl-proline and L-tryptophan by the bimodular NRPS phqB, to produce a monooxopiperazine intermediate. The reductase (R) domain of phqB utilizes NADPH for hydride transfer to reduce the thioester bond of the T domain-tethered linear dipeptide to a hemithioaminal intermediate, which spontaneously cleaves the C-S bond to release the aldehyde product. This compound undergoes spontaneous cyclization and dehydration to give a dienamine which is reverse prenylated at C-2 by the reverse prenyltransferase phqJ. The other prenyltransferase present in the cluster, phqI may be a redundant gene in the pathway. During biosynthetic assembly, the key step to produce the polycyclic core is catalyzed by the bifunctional reductase and intramolecular [4+2] Diels-Alderase, phqE, resulting in formation of the [2.2.2] diazaoctane intermediate preparaherquamide. Following formation of preparaherquamide, an indole 2,3-epoxidation-initiated pinacol-like rearrangement is catalyzed by the phqK FAD-dependent monooxygenase. The prenyltransferase phqA, the cytochrome P450 monooxygenase phqL, and the FAD-linked oxidoreductase phqH (or the cytochrome P450 monooxygenase phqM), are proposed to be involved in the formation of the pyran ring. The FAD-dependent monooxygenase phqK is likely responsible for generation of the spiro-oxindole, and the N-methylation is likely mediated by the phqN methyltransferase leading to the isolable natural product paraherquamide F. However, the order of these biosynthetic steps has still to be determined. In late-stage paraherquamide biosynthesis, the third P450 monooxygenase, phqO, is probably responsible for the C-14 hydroxylation, transforming paraherquamide F to paraherquamide G, and paraherquamide E to the final product paraherquamide A. The expansion from the 6-membered ring pyran (in paraherquamides F and G) to the 7-membered dioxepin ring (in paraherquamides A and E) represents a poorly understood but intriguing process that probably involves the 2-oxoglutarate-dependent dioxygenase phqC. Finally, the remaining members of the paraherquamide cluster, including phqI as well as phqM (or phqH), do not have a clearly prescribed role and appear to be redundant. In Penicillium fellutanum, this protein is Prenyltransferase phqJ.